The following is a 548-amino-acid chain: SH2B adapter protein 3 (548 aa).

Residues 1 to 11 are compositionally biased toward polar residues; sequence MNEPTVQPSRT. Disordered stretches follow at residues 1 to 25, 78 to 108, and 128 to 160; these read MNEP…RGWS, SLAG…DLGP, and RSAG…LLPW. The span at 12 to 21 shows a compositional bias: low complexity; that stretch reads SSAPASPASP. 3 positions are modified to phosphoserine: serine 13, serine 102, and serine 129. Positions 137–148 are enriched in polar residues; the sequence is TSDTNDIDTTAA. A PH domain is found at 168–279; that stretch reads EALKEVVLRY…WLAELRASTG (112 aa). The disordered stretch occupies residues 290–313; the sequence is PLSLAAEPGPARSPRGSTDSLDQG. A Phosphoserine modification is found at serine 302. One can recognise an SH2 domain in the interval 336–434; the sequence is WFHGPISRVR…ACDVRLSGYV (99 aa).

It belongs to the SH2B adapter family. Tyrosine phosphorylated.

Functionally, links T-cell receptor activation signal to phospholipase C-gamma-1, GRB2 and phosphatidylinositol 3-kinase. The protein is SH2B adapter protein 3 (Sh2b3) of Mus musculus (Mouse).